We begin with the raw amino-acid sequence, 341 residues long: Cell division protein FtsX (341 aa).

The interval 1 to 34 is disordered; that stretch reads MSTTRTPKVSERVAPKPADPQPAKKKRGEDDDGP. Topologically, residues 1 to 65 are cytoplasmic; sequence MSTTRTPKVS…RRLGKQPIGS (65 aa). A helical transmembrane segment spans residues 66–86; sequence FFTCLVMAVALSMPMGLSLLL. The Periplasmic segment spans residues 87–212; that stretch reads KNIEQLGGSW…LAAILKLGDR (126 aa). The helical transmembrane segment at 213-233 threads the bilayer; it reads FVFGLAVMLISALLLVIGNTI. Over 234–263 the chain is Cytoplasmic; the sequence is RLHIENRRIEIEVIKLVGGTDAYVRRPFLY. Residues 264–284 form a helical membrane-spanning segment; it reads MGALYGLGAGLLAWGILAFGL. Topologically, residues 285–311 are periplasmic; it reads NWLNEAVVGLSGLYGSDFALGGVPASD. Residues 312 to 332 form a helical membrane-spanning segment; sequence GLSLLIGAVLLGYIGAWIAVA. The Cytoplasmic portion of the chain corresponds to 333 to 341; it reads RHLNELAPR.

This sequence belongs to the ABC-4 integral membrane protein family. FtsX subfamily. In terms of assembly, forms a membrane-associated complex with FtsE.

The protein resides in the cell inner membrane. Its function is as follows. Part of the ABC transporter FtsEX involved in cellular division. In Pseudomonas putida (Arthrobacter siderocapsulatus), this protein is Cell division protein FtsX.